A 397-amino-acid polypeptide reads, in one-letter code: Serpin B10 (397 aa).

A Nuclear localization signal motif is present at residues 74-77; sequence KKRK.

Belongs to the serpin family. Ov-serpin subfamily.

It localises to the nucleus. Its subcellular location is the cytoplasm. Protease inhibitor that may play a role in the regulation of protease activities during hematopoiesis and apoptosis induced by TNF. May regulate protease activities in the cytoplasm and in the nucleus. The protein is Serpin B10 (SERPINB10) of Otolemur garnettii (Small-eared galago).